Here is a 338-residue protein sequence, read N- to C-terminus: Phenylalanine--tRNA ligase alpha subunit (338 aa).

E253 lines the Mg(2+) pocket.

It belongs to the class-II aminoacyl-tRNA synthetase family. Phe-tRNA synthetase alpha subunit type 1 subfamily. As to quaternary structure, tetramer of two alpha and two beta subunits. The cofactor is Mg(2+).

The protein resides in the cytoplasm. It carries out the reaction tRNA(Phe) + L-phenylalanine + ATP = L-phenylalanyl-tRNA(Phe) + AMP + diphosphate + H(+). This Gloeobacter violaceus (strain ATCC 29082 / PCC 7421) protein is Phenylalanine--tRNA ligase alpha subunit.